A 691-amino-acid polypeptide reads, in one-letter code: Cyclic nucleotide-gated channel alpha-1 (691 aa).

Residues 1 to 168 (MKKNIINTWY…PAGNMYYNWL (168 aa)) lie on the Cytoplasmic side of the membrane. Residues 31–151 (ENGARSSFSD…KGKDKKEEEK (121 aa)) are disordered. Residues 39–56 (SDDDGDDDSASMFEESEN) are compositionally biased toward acidic residues. Basic and acidic residues-rich tracts occupy residues 57–76 (ETPHARDSCRNNSQRRDPSQ) and 112–151 (SKSGDKNENKKDSEKKKKKEKEKEKKNKEEKGKDKKEEEK). A helical transmembrane segment spans residues 169–190 (FCITLPVMYNWTMVIARACFDE). At 191-200 (LQSDYLEYWI) the chain is on the extracellular side. A helical transmembrane segment spans residues 201–221 (IFDYLSDIVYLLDMFVRTRTG). At 222 to 246 (YLEQGLLVREEAKLIEKYKSNLQFK) the chain is on the cytoplasmic side. A helical membrane pass occupies residues 247–265 (LDFLSVIPTDLLYFKLGWN). Residues 266–270 (YPEIR) lie on the Extracellular side of the membrane. A helical transmembrane segment spans residues 271 to 289 (LNRLLRISRMFEFFQRTET). Residues 290-296 (RTNYPNI) lie on the Cytoplasmic side of the membrane. Residues 294 to 402 (PNIFRISNLV…GNIGSMISNM (109 aa)) are ion conduction pathway. The chain crosses the membrane as a helical span at residues 297–320 (FRISNLVMYIVIIIHWNACVYFSI). Topologically, residues 321–343 (SKAIGFGNDTWVYPDVNDPEFGR) are extracellular. N-linked (GlcNAc...) asparagine glycosylation is present at asparagine 328. 2 consecutive transmembrane segments (helical) span residues 344 to 378 (LARKYVYSLYWSTLTLTTIGETPPPVRDSEYVFVV) and 379 to 403 (VDFLIGVLIFATIVGNIGSMISNMN). The segment at 361-364 (TIGE) is selectivity filter. A C-linker region spans residues 404 to 480 (AARAEFQARI…DTLKKVRIFA (77 aa)). At 404–691 (AARAEFQARI…ESRPLDSTQD (288 aa)) the chain is on the cytoplasmic side. The segment at 484–604 (AGLLVELVLK…EEKGKQILMK (121 aa)) is cyclic nucleotide-binding domain. 4 residues coordinate 3',5'-cyclic GMP: glycine 544, serine 547, arginine 560, and threonine 561. 3',5'-cyclic AMP is bound by residues arginine 560 and threonine 561. Residues 622 to 676 (LEEKVTRMEGSVDLLQTRFARILAEYESMQQKLKQRLTKVERFLKPIIDTEFSAL) are a coiled coil.

Belongs to the cyclic nucleotide-gated cation channel (TC 1.A.1.5) family. CNGA1 subfamily. Forms heterotetrameric channels composed of CNGA1 and CNGB1 subunits with 3:1 stoichiometry. May also form cyclic nucleotide-activated homotetrameric channels, that are efficiently activated by saturating cGMP, but poorly activated by saturating cAMP compared to the heterotetramer with CNGB1. The channel binds Ca(2+)-bound CALM1 via CaM1 and CaM2 regions of the CNGB1 subunit; this interaction modulates the affinity of the channel for cNMPs in response to intracellular Ca(2+) levels.

The protein localises to the cell membrane. It carries out the reaction Ca(2+)(in) = Ca(2+)(out). It catalyses the reaction Na(+)(in) = Na(+)(out). The enzyme catalyses K(+)(in) = K(+)(out). The catalysed reaction is NH4(+)(in) = NH4(+)(out). It carries out the reaction Rb(+)(in) = Rb(+)(out). It catalyses the reaction Li(+)(in) = Li(+)(out). The enzyme catalyses Cs(+)(in) = Cs(+)(out). In terms of biological role, pore-forming subunit of the rod cyclic nucleotide-gated channel. Mediates rod photoresponses at dim light converting transient changes in intracellular cGMP levels into electrical signals. In the dark, cGMP levels are high and keep the channel open enabling a steady inward current carried by Na(+) and Ca(2+) ions that leads to membrane depolarization and neurotransmitter release from synaptic terminals. Upon photon absorption cGMP levels decline leading to channel closure and membrane hyperpolarization that ultimately slows neurotransmitter release and signals the presence of light, the end point of the phototransduction cascade. Conducts cGMP- and cAMP-gated ion currents, with permeability for monovalent and divalent cations. The selectivity for Ca(2+) over Na(+) increases with cGMP concentrations, whereas the selectivity among monovalent ions is independent of the cGMP levels. In Canis lupus familiaris (Dog), this protein is Cyclic nucleotide-gated channel alpha-1.